Consider the following 387-residue polypeptide: Chorismate synthase (387 aa).

NADP(+) is bound by residues R42 and R48. Residues 131 to 133 (RSS), 251 to 252 (QA), G295, 310 to 314 (KPIPT), and R336 contribute to the FMN site.

Belongs to the chorismate synthase family. As to quaternary structure, homotetramer. FMNH2 is required as a cofactor.

It catalyses the reaction 5-O-(1-carboxyvinyl)-3-phosphoshikimate = chorismate + phosphate. The protein operates within metabolic intermediate biosynthesis; chorismate biosynthesis; chorismate from D-erythrose 4-phosphate and phosphoenolpyruvate: step 7/7. Its function is as follows. Catalyzes the anti-1,4-elimination of the C-3 phosphate and the C-6 proR hydrogen from 5-enolpyruvylshikimate-3-phosphate (EPSP) to yield chorismate, which is the branch point compound that serves as the starting substrate for the three terminal pathways of aromatic amino acid biosynthesis. This reaction introduces a second double bond into the aromatic ring system. This is Chorismate synthase from Syntrophotalea carbinolica (strain DSM 2380 / NBRC 103641 / GraBd1) (Pelobacter carbinolicus).